The following is a 266-amino-acid chain: Hemin import ATP-binding protein HmuV (266 aa).

An ABC transporter domain is found at 2-242 (IEAVDICVQR…QNLRDVYSCS (241 aa)). 34–41 (GPNGSGKS) lines the ATP pocket.

It belongs to the ABC transporter superfamily. Heme (hemin) importer (TC 3.A.1.14.5) family. In terms of assembly, the complex is composed of two ATP-binding proteins (HmuV), two transmembrane proteins (HmuU) and a solute-binding protein (HmuT).

It localises to the cell inner membrane. Its function is as follows. Part of the ABC transporter complex HmuTUV involved in hemin import. Responsible for energy coupling to the transport system. The sequence is that of Hemin import ATP-binding protein HmuV from Bartonella henselae (strain ATCC 49882 / DSM 28221 / CCUG 30454 / Houston 1) (Rochalimaea henselae).